The sequence spans 561 residues: DNA ligase (561 aa).

Residue E253 participates in ATP binding. The active-site N6-AMP-lysine intermediate is the K255. Residues R260, R275, E304, F344, R421, and K427 each contribute to the ATP site.

This sequence belongs to the ATP-dependent DNA ligase family. Requires Mg(2+) as cofactor.

The enzyme catalyses ATP + (deoxyribonucleotide)n-3'-hydroxyl + 5'-phospho-(deoxyribonucleotide)m = (deoxyribonucleotide)n+m + AMP + diphosphate.. DNA ligase that seals nicks in double-stranded DNA during DNA replication, DNA recombination and DNA repair. In Halobacterium salinarum (strain ATCC 29341 / DSM 671 / R1), this protein is DNA ligase.